Consider the following 493-residue polypeptide: Ketol-acid reductoisomerase (NADP(+)) (493 aa).

The KARI N-terminal Rossmann domain occupies 14-208 (LDQLGRCRFM…GGDRAGVLES (195 aa)). NADP(+) contacts are provided by residues 45 to 48 (CGAQ), Arg-68, Arg-76, Ser-78, and 108 to 110 (DKQ). His-132 is an active-site residue. Gly-158 provides a ligand contact to NADP(+). KARI C-terminal knotted domains follow at residues 209–345 (SFVA…APKA) and 346–486 (DGIK…MTDM). Residues Asp-217, Glu-221, Glu-390, and Glu-394 each contribute to the Mg(2+) site. Ser-415 is a substrate binding site.

The protein belongs to the ketol-acid reductoisomerase family. It depends on Mg(2+) as a cofactor.

It carries out the reaction (2R)-2,3-dihydroxy-3-methylbutanoate + NADP(+) = (2S)-2-acetolactate + NADPH + H(+). It catalyses the reaction (2R,3R)-2,3-dihydroxy-3-methylpentanoate + NADP(+) = (S)-2-ethyl-2-hydroxy-3-oxobutanoate + NADPH + H(+). The protein operates within amino-acid biosynthesis; L-isoleucine biosynthesis; L-isoleucine from 2-oxobutanoate: step 2/4. It participates in amino-acid biosynthesis; L-valine biosynthesis; L-valine from pyruvate: step 2/4. Involved in the biosynthesis of branched-chain amino acids (BCAA). Catalyzes an alkyl-migration followed by a ketol-acid reduction of (S)-2-acetolactate (S2AL) to yield (R)-2,3-dihydroxy-isovalerate. In the isomerase reaction, S2AL is rearranged via a Mg-dependent methyl migration to produce 3-hydroxy-3-methyl-2-ketobutyrate (HMKB). In the reductase reaction, this 2-ketoacid undergoes a metal-dependent reduction by NADPH to yield (R)-2,3-dihydroxy-isovalerate. This is Ketol-acid reductoisomerase (NADP(+)) from Mannheimia succiniciproducens (strain KCTC 0769BP / MBEL55E).